Consider the following 377-residue polypeptide: MSDTLDLAVELIRRESVTPEDAGCMDLVIERLAPHGFQAEWLNFGDTKNLWLRRGEAAPLFVFLGHTDVVPPGPLEDWSSPPFAPEIREGRLYGRGAADMKGSIAAMTTALQRFVVHHPGHPGSLAVLLTSDEEGSAYDGVVKVVDVLKSRDTVIDWCLVGEPSSFARLGDVIRVGRRGSLGGVLRILGVQGHVAYPDKADNPIHRFAPALHELTTEIWDGGNEFFPPTSFQVSNIRAGTGADNVIPGKLEVLFNFRFSTELTVEAIQRRVETILDRHGLHYELSWRLSGLPFLTRETELVSATRAAIAAVTGLQPRADTGGGTSDGRFIAPTGAQVVELGPLNGSIHKIDEHVAVEDLEALSAIYERILGNLLAVL.

Histidine 66 is a Zn(2+) binding site. Residue aspartate 68 is part of the active site. Aspartate 99 serves as a coordination point for Zn(2+). Glutamate 133 functions as the Proton acceptor in the catalytic mechanism. Residues glutamate 134, glutamate 162, and histidine 348 each contribute to the Zn(2+) site.

The protein belongs to the peptidase M20A family. DapE subfamily. In terms of assembly, homodimer. Zn(2+) serves as cofactor. The cofactor is Co(2+).

It carries out the reaction N-succinyl-(2S,6S)-2,6-diaminopimelate + H2O = (2S,6S)-2,6-diaminopimelate + succinate. The protein operates within amino-acid biosynthesis; L-lysine biosynthesis via DAP pathway; LL-2,6-diaminopimelate from (S)-tetrahydrodipicolinate (succinylase route): step 3/3. In terms of biological role, catalyzes the hydrolysis of N-succinyl-L,L-diaminopimelic acid (SDAP), forming succinate and LL-2,6-diaminopimelate (DAP), an intermediate involved in the bacterial biosynthesis of lysine and meso-diaminopimelic acid, an essential component of bacterial cell walls. The chain is Succinyl-diaminopimelate desuccinylase from Methylococcus capsulatus (strain ATCC 33009 / NCIMB 11132 / Bath).